A 197-amino-acid chain; its full sequence is Phosphoheptose isomerase (197 aa).

Residues 34–196 form the SIS domain; that stretch reads MVQCLLGGNK…DRTLFPQDEQ (163 aa). Residue 49–51 coordinates substrate; the sequence is NGG. His-58 and Glu-62 together coordinate Zn(2+). Residues Glu-62, 91-92, 117-119, Ser-122, and Gln-172 contribute to the substrate site; these read ND and STS. Positions 172 and 180 each coordinate Zn(2+).

Belongs to the SIS family. GmhA subfamily. In terms of assembly, homotetramer. Zn(2+) is required as a cofactor.

Its subcellular location is the cytoplasm. The catalysed reaction is 2 D-sedoheptulose 7-phosphate = D-glycero-alpha-D-manno-heptose 7-phosphate + D-glycero-beta-D-manno-heptose 7-phosphate. It functions in the pathway carbohydrate biosynthesis; D-glycero-D-manno-heptose 7-phosphate biosynthesis; D-glycero-alpha-D-manno-heptose 7-phosphate and D-glycero-beta-D-manno-heptose 7-phosphate from sedoheptulose 7-phosphate: step 1/1. Catalyzes the isomerization of sedoheptulose 7-phosphate in D-glycero-D-manno-heptose 7-phosphate. This Shewanella frigidimarina (strain NCIMB 400) protein is Phosphoheptose isomerase.